A 126-amino-acid chain; its full sequence is Holo-[acyl-carrier-protein] synthase (126 aa).

Aspartate 9 and glutamate 58 together coordinate Mg(2+).

This sequence belongs to the P-Pant transferase superfamily. AcpS family. Mg(2+) serves as cofactor.

It is found in the cytoplasm. The enzyme catalyses apo-[ACP] + CoA = holo-[ACP] + adenosine 3',5'-bisphosphate + H(+). Its function is as follows. Transfers the 4'-phosphopantetheine moiety from coenzyme A to a Ser of acyl-carrier-protein. In Aliivibrio salmonicida (strain LFI1238) (Vibrio salmonicida (strain LFI1238)), this protein is Holo-[acyl-carrier-protein] synthase.